Consider the following 352-residue polypeptide: Ion-translocating oxidoreductase complex subunit D (352 aa).

A run of 4 helical transmembrane segments spans residues 20–40, 42–62, 69–91, and 123–143; these read IMLLVLIAALPGIAAQTWFFG, GTLFQIVLAAITALVAEAIVL, VASHLQDYSALLTGLLLAVSIPP, and PAMIGYVVLLISFPVQMTSWL. T187 is subject to FMN phosphoryl threonine. 5 helical membrane-spanning segments follow: residues 215-235, 242-262, 267-287, 301-321, and 322-342; these read LAGVGWQWVNLAWLVGGVFLL, WHIPVSFLLTLALCAALGWLF, LASPQLHLLSGATMLGAFFIL, LIFGALAGVLVWLIRSFGGYP, and DGVAFAVLLANITVPLIDYYT.

The protein belongs to the NqrB/RnfD family. The complex is composed of six subunits: RsxA, RsxB, RsxC, RsxD, RsxE and RsxG. The cofactor is FMN.

It is found in the cell inner membrane. Part of a membrane-bound complex that couples electron transfer with translocation of ions across the membrane. Required to maintain the reduced state of SoxR. This Salmonella paratyphi A (strain ATCC 9150 / SARB42) protein is Ion-translocating oxidoreductase complex subunit D.